Here is a 427-residue protein sequence, read N- to C-terminus: Zinc finger protein DPF3 (427 aa).

The disordered stretch occupies residues Leu182–Asp244. The segment covering Asn184 to Glu199 has biased composition (acidic residues). Basic and acidic residues predominate over residues Arg233 to Asp244. A C2H2-type zinc finger spans residues Tyr247–His270. The disordered stretch occupies residues Ala272 to Pro301. The span at Ala279–Lys296 shows a compositional bias: basic and acidic residues. PHD-type zinc fingers lie at residues Asn308–Cys368 and Cys365–Leu415.

The protein belongs to the requiem/DPF family. As to quaternary structure, component of the BAF complex. Interacts with acetylated histones H3 and H4. Component of neuron-specific chromatin remodeling complex (nBAF complex), a subfamily of ATP-dependent SWI/SNF chromatin remodeling complexes. Expressed in the heart and somites.

It is found in the nucleus. In terms of biological role, muscle-specific component of the BAF complex, a multiprotein complex involved in transcriptional activation and repression of select genes by chromatin remodeling (alteration of DNA-nucleosome topology). Specifically binds acetylated lysines on histone 3 and 4. In the complex, it acts as a tissue-specific anchor between histone acetylations and methylations and chromatin remodeling. It thereby probably plays an essential role in heart and skeletal muscle development. Belongs to the neuron-specific chromatin remodeling complex (nBAF complex) and plays a role in neural development. The chain is Zinc finger protein DPF3 (DPF3) from Gallus gallus (Chicken).